The following is a 149-amino-acid chain: Ribonuclease P protein component (149 aa).

Positions 123–149 are disordered; that stretch reads GTKVSRRSNGALHDAAPSSQPDPTVSG. Over residues 139–149 the composition is skewed to polar residues; it reads PSSQPDPTVSG.

It belongs to the RnpA family. Consists of a catalytic RNA component (M1 or rnpB) and a protein subunit.

The enzyme catalyses Endonucleolytic cleavage of RNA, removing 5'-extranucleotides from tRNA precursor.. RNaseP catalyzes the removal of the 5'-leader sequence from pre-tRNA to produce the mature 5'-terminus. It can also cleave other RNA substrates such as 4.5S RNA. The protein component plays an auxiliary but essential role in vivo by binding to the 5'-leader sequence and broadening the substrate specificity of the ribozyme. The polypeptide is Ribonuclease P protein component (Caulobacter vibrioides (strain ATCC 19089 / CIP 103742 / CB 15) (Caulobacter crescentus)).